A 260-amino-acid chain; its full sequence is MEDLVDELYGVDEQGSSSAAARKRRLTAEQVRALERSFEEEKRKLEPERKSELARRLGIAPRQVAVWFQNRRARWKTKQLELDFDRLRAAHDELLAGRAALAADNESLRSQVILLTEKLQANGKSPSPSPAPAEQTAVPAAPESAKSFQLEEGRCLYDAAGSTTTTNGGGGGVAMPAARVAAARAASNDSPESYFAGARSPPSSSEDDCGGAGSDDDYPSSSVLLPVDATLVGDAFEHAVAATVAADEEAPLNSWEWFWN.

Acidic residues predominate over residues 1-10 (MEDLVDELYG). Disordered regions lie at residues 1 to 24 (MEDL…ARKR), 121 to 145 (ANGK…PESA), and 190 to 221 (SPES…YPSS). Residues 19–79 (AAARKRRLTA…NRRARWKTKQ (61 aa)) constitute a DNA-binding region (homeobox). The leucine-zipper stretch occupies residues 78-122 (KQLELDFDRLRAAHDELLAGRAALAADNESLRSQVILLTEKLQAN). Positions 205-218 (SEDDCGGAGSDDDY) are enriched in acidic residues.

Belongs to the HD-ZIP homeobox family. Class I subfamily. As to expression, expressed in roots, leaf sheaths and blades and panicles.

It localises to the nucleus. Probable transcription factor. In Oryza sativa subsp. indica (Rice), this protein is Homeobox-leucine zipper protein HOX25 (HOX25).